The chain runs to 178 residues: Actin-related protein 2/3 complex subunit 3-B (178 aa).

The protein belongs to the ARPC3 family. Component of the Arp2/3 complex composed of actr2/arp2, actr3/arp3, arpc1 (arpc1a or arpc1b), arpc2, arpc3, arpc4 and arpc5.

The protein resides in the cytoplasm. It is found in the cytoskeleton. The protein localises to the cell projection. Its subcellular location is the nucleus. Its function is as follows. Component of the Arp2/3 complex, a multiprotein complex that mediates actin polymerization upon stimulation by nucleation-promoting factor (NPF). The Arp2/3 complex mediates the formation of branched actin networks in the cytoplasm, providing the force for cell motility. In addition to its role in the cytoplasmic cytoskeleton, the Arp2/3 complex also promotes actin polymerization in the nucleus, thereby regulating gene transcription and repair of damaged DNA. The Arp2/3 complex promotes homologous recombination (HR) repair in response to DNA damage by promoting nuclear actin polymerization, leading to drive motility of double-strand breaks (DSBs). This is Actin-related protein 2/3 complex subunit 3-B (arpc3-b) from Xenopus laevis (African clawed frog).